The sequence spans 393 residues: MQLHDHMKYIDLGCKMACIPRYQWKGRPTERQFYASEQRIVFLLGTICQIFQITGVLIYWYCNGRLATETGTFVAQLSEMCSSFCLTFVGFCNVYAISTNRNQIETLLEELHQIYPRYRKNHYRCQHYFDMAMTIMRIEFLFYMILYVYYNSAPLWVLLWEHLHEEYDLSFKTQTNTWFPWKVHGSALGFGMAVLSITVGSFVGVGFSIVTQNLICLLTFQLKLHYDGISSQLVSLDCRRPGAHKELSILIAHHSRILQLGDQVNDIMNFVFGSSLVGATIAICMSSVSIMLLDLASAFKYASGLVAFVLYNFVICYMGTEVTLASGKVLPAAFYNNWYEGDLVYRRMLLILMMRATKPYMWKTYKLAPVSITTYMATLKFSYQMFTCVRSLK.

The Cytoplasmic segment spans residues 1 to 39; sequence MQLHDHMKYIDLGCKMACIPRYQWKGRPTERQFYASEQR. Residues 40 to 60 traverse the membrane as a helical segment; that stretch reads IVFLLGTICQIFQITGVLIYW. Over 61–76 the chain is Extracellular; the sequence is YCNGRLATETGTFVAQ. Residues 77-97 form a helical membrane-spanning segment; it reads LSEMCSSFCLTFVGFCNVYAI. Topologically, residues 98-139 are cytoplasmic; it reads STNRNQIETLLEELHQIYPRYRKNHYRCQHYFDMAMTIMRIE. Residues 140–160 traverse the membrane as a helical segment; the sequence is FLFYMILYVYYNSAPLWVLLW. The Extracellular portion of the chain corresponds to 161–189; sequence EHLHEEYDLSFKTQTNTWFPWKVHGSALG. A helical transmembrane segment spans residues 190–210; it reads FGMAVLSITVGSFVGVGFSIV. At 211 to 269 the chain is on the cytoplasmic side; it reads TQNLICLLTFQLKLHYDGISSQLVSLDCRRPGAHKELSILIAHHSRILQLGDQVNDIMN. Residues 270-290 traverse the membrane as a helical segment; it reads FVFGSSLVGATIAICMSSVSI. The Extracellular portion of the chain corresponds to 291–304; the sequence is MLLDLASAFKYASG. Residues 305-325 form a helical membrane-spanning segment; that stretch reads LVAFVLYNFVICYMGTEVTLA. The Cytoplasmic segment spans residues 326 to 365; sequence SGKVLPAAFYNNWYEGDLVYRRMLLILMMRATKPYMWKTY. A helical membrane pass occupies residues 366–386; that stretch reads KLAPVSITTYMATLKFSYQMF. Topologically, residues 387–393 are extracellular; it reads TCVRSLK.

Belongs to the insect chemoreceptor superfamily. Heteromeric odorant receptor channel (TC 1.A.69) family. Or49a subfamily. As to quaternary structure, interacts with Orco. Complexes exist early in the endomembrane system in olfactory sensory neurons (OSNs), coupling these complexes to the conserved ciliary trafficking pathway. In terms of tissue distribution, expressed in olfactory sensory neurons in the antenna.

Its subcellular location is the cell membrane. Odorant receptor which mediates acceptance or avoidance behavior, depending on its substrates. The odorant receptor repertoire encodes a large collection of odor stimuli that vary widely in identity, intensity, and duration. May form a complex with Orco to form odorant-sensing units, providing sensitive and prolonged odorant signaling and calcium permeability. This Drosophila melanogaster (Fruit fly) protein is Putative odorant receptor 69a, isoform A (Or69a).